A 362-amino-acid chain; its full sequence is Fructose-bisphosphate aldolase (362 aa).

Dihydroxyacetone phosphate is bound at residue Asp-33. Residues Ser-35 and Thr-38 each contribute to the D-glyceraldehyde 3-phosphate site. Position 42 (Arg-42) interacts with beta-D-fructose 1,6-bisphosphate. A D-glyceraldehyde 3-phosphate-binding site is contributed by Lys-106. Residue Lys-145 participates in dihydroxyacetone phosphate binding. Glu-188 lines the D-glyceraldehyde 3-phosphate pocket. Catalysis depends on Glu-188, which acts as the Proton acceptor. 3 residues coordinate dihydroxyacetone phosphate: Lys-230, Ser-272, and Gly-273. The active-site Schiff-base intermediate with dihydroxyacetone phosphate is Lys-230. Beta-D-fructose 1,6-bisphosphate is bound by residues Ser-272–Gly-274 and Ser-300. Dihydroxyacetone phosphate contacts are provided by Gly-302 and Arg-303. Arg-303 is a binding site for beta-D-fructose 1,6-bisphosphate.

This sequence belongs to the class I fructose-bisphosphate aldolase family. In terms of assembly, homotetramer. Interacts with TRAP (via cytoplasmic domain); the interaction prevents substrate binding and thereby inhibits aldolase activity. Interacts with MTRAP (via cytoplasmic domain); MTRAP phosphorylation may increase the binding to FBPA. Interact with RH1 (via cytoplasmic domain). Interacts with RH2b (via cytoplasmic domain). Interacts with RH4 (via cytoplasmic domain). Interacts with AMA1 (via cytoplasmic domain); the interaction is weak, however it may be increased upon AMA1 phosphorylation. Interacts with EBA140 (via cytoplasmic domain); the interaction is weak. Interacts with EBA175 (via cytoplasmic domain); the interaction is weak. Interacts with EBA181 (via cytoplasmic domain); the interaction is weak. Interacts with G-actin and F-actin. May interact with ACT2/actin II; the interaction inhibits FBPA catalytic activity. Interacts with human SLC4A1/band 3 (via N-terminus); the interaction inhibits FBPA catalytic activity.

The protein resides in the cytoplasm. It localises to the membrane. The protein localises to the host cell membrane. It carries out the reaction beta-D-fructose 1,6-bisphosphate = D-glyceraldehyde 3-phosphate + dihydroxyacetone phosphate. It participates in carbohydrate degradation; glycolysis; D-glyceraldehyde 3-phosphate and glycerone phosphate from D-glucose: step 4/4. With respect to regulation, the cytoplasmic tail of TRAP and probably other adhesins acts as a competitive inhibitor as the binding sites of the glycolytic substrate fructose 1,6-bisphosphate and TRAP partially overlap. Inhibited by suramin, an antiparasitic drug used to treat Trypanosome-mediated infection. In terms of biological role, plays a key role in glycolysis by catalyzing the cleavage of fructose 1,6-bisphosphate into dihydroxyacetone phosphate and glyceraldehyde 3-phosphate. Independently of its catalytic activity, connects the actin filaments, and thus the actomyosin motor, to cell surface adhesins of the thrombospondin-related anonymous protein (TRAP), the erythrocyte binding ligand (EBL) and reticulocyte binding homolog (RH) protein families; this interaction is probably involved in transducing the motor force across the parasite surface required for sporozoite and ookinete gliding motility and merozoite invasion. Stimulates actin polymerisation. This Plasmodium falciparum (isolate K1 / Thailand) protein is Fructose-bisphosphate aldolase.